Reading from the N-terminus, the 157-residue chain is Endoribonuclease YbeY (157 aa).

Zn(2+) contacts are provided by His-121, His-125, and Asp-131.

This sequence belongs to the endoribonuclease YbeY family. It depends on Zn(2+) as a cofactor.

Its subcellular location is the cytoplasm. Single strand-specific metallo-endoribonuclease involved in late-stage 70S ribosome quality control and in maturation of the 3' terminus of the 16S rRNA. The sequence is that of Endoribonuclease YbeY from Salinibacter ruber (strain DSM 13855 / M31).